Consider the following 310-residue polypeptide: Glutaminase 1 (310 aa).

Residues S66, N117, E161, N168, Y192, Y244, and V262 each contribute to the substrate site. At K294 the chain carries N6-acetyllysine.

The protein belongs to the glutaminase family. In terms of assembly, homotetramer.

It carries out the reaction L-glutamine + H2O = L-glutamate + NH4(+). The chain is Glutaminase 1 from Escherichia coli (strain K12).